Reading from the N-terminus, the 320-residue chain is GTPase Era (320 aa).

Positions 25–193 (HCGFIAIVGR…RKHVRDHLPK (169 aa)) constitute an Era-type G domain. Residues 33–40 (GRPNVGKS) form a G1 region. Residue 33–40 (GRPNVGKS) coordinates GTP. The tract at residues 59–63 (QTTRH) is G2. The interval 80-83 (DTPG) is G3. GTP-binding positions include 80–84 (DTPGL) and 142–145 (NKVD). Positions 142–145 (NKVD) are G4. The segment at 172–174 (ISA) is G5. Residues 216–302 (VREKLMRFTG…YLETWVKVKS (87 aa)) form the KH type-2 domain.

This sequence belongs to the TRAFAC class TrmE-Era-EngA-EngB-Septin-like GTPase superfamily. Era GTPase family. Monomer.

Its subcellular location is the cytoplasm. The protein resides in the cell inner membrane. Functionally, an essential GTPase that binds both GDP and GTP, with rapid nucleotide exchange. Plays a role in 16S rRNA processing and 30S ribosomal subunit biogenesis and possibly also in cell cycle regulation and energy metabolism. This Vibrio vulnificus (strain CMCP6) protein is GTPase Era.